We begin with the raw amino-acid sequence, 399 residues long: Tetracycline resistance protein, class A (399 aa).

12 helical membrane passes run 7–29 (LIVI…PVLP), 44–66 (HYGI…LGAL), 73–95 (RPVL…TAPF), 99–121 (LYIG…AYIA), 133–155 (FGFM…GLMG), 160–182 (HAPF…FLLP), 203–225 (FRWA…MQLV), 245–267 (ATTI…AMIT), 279–298 (ALML…AFAT), 302–324 (MAFP…QAML), 336–358 (LQGS…FTAI), and 368–390 (GWAW…RGLW).

Belongs to the major facilitator superfamily. TCR/Tet family.

The protein resides in the cell inner membrane. Functionally, resistance to tetracycline by an active tetracycline efflux. This is an energy-dependent process that decreases the accumulation of the antibiotic in whole cells. This protein functions as a metal-tetracycline/H(+) antiporter. The protein is Tetracycline resistance protein, class A (tetA) of Escherichia coli.